The following is a 131-amino-acid chain: Spermatocyte protein spe-27 (131 aa).

The signal sequence occupies residues 1-17 (MNKSLIFLLSFAYSCYS).

In terms of biological role, required for spermiogenesis. The sequence is that of Spermatocyte protein spe-27 (spe-27) from Caenorhabditis elegans.